We begin with the raw amino-acid sequence, 344 residues long: tRNA N6-adenosine threonylcarbamoyltransferase (344 aa).

Residues His-119 and His-123 each coordinate Fe cation. Substrate contacts are provided by residues 141 to 145, Asp-174, Gly-187, Asp-191, and Asn-280; that span reads VVSGG. Asp-310 lines the Fe cation pocket.

It belongs to the KAE1 / TsaD family. The cofactor is Fe(2+).

The protein localises to the cytoplasm. It carries out the reaction L-threonylcarbamoyladenylate + adenosine(37) in tRNA = N(6)-L-threonylcarbamoyladenosine(37) in tRNA + AMP + H(+). Its function is as follows. Required for the formation of a threonylcarbamoyl group on adenosine at position 37 (t(6)A37) in tRNAs that read codons beginning with adenine. Is involved in the transfer of the threonylcarbamoyl moiety of threonylcarbamoyl-AMP (TC-AMP) to the N6 group of A37, together with TsaE and TsaB. TsaD likely plays a direct catalytic role in this reaction. In Listeria monocytogenes serotype 4b (strain CLIP80459), this protein is tRNA N6-adenosine threonylcarbamoyltransferase.